A 285-amino-acid polypeptide reads, in one-letter code: Hydroxyethylthiazole kinase 1 (285 aa).

Methionine 48 provides a ligand contact to substrate. ATP is bound by residues arginine 124 and serine 183. Substrate is bound at residue glycine 210.

The protein belongs to the Thz kinase family. Mg(2+) is required as a cofactor.

It carries out the reaction 5-(2-hydroxyethyl)-4-methylthiazole + ATP = 4-methyl-5-(2-phosphooxyethyl)-thiazole + ADP + H(+). The protein operates within cofactor biosynthesis; thiamine diphosphate biosynthesis; 4-methyl-5-(2-phosphoethyl)-thiazole from 5-(2-hydroxyethyl)-4-methylthiazole: step 1/1. Catalyzes the phosphorylation of the hydroxyl group of 4-methyl-5-beta-hydroxyethylthiazole (THZ). The sequence is that of Hydroxyethylthiazole kinase 1 from Methanosphaera stadtmanae (strain ATCC 43021 / DSM 3091 / JCM 11832 / MCB-3).